Here is a 466-residue protein sequence, read N- to C-terminus: Argininosuccinate lyase (466 aa).

The protein belongs to the lyase 1 family. Argininosuccinate lyase subfamily.

The protein resides in the cytoplasm. It catalyses the reaction 2-(N(omega)-L-arginino)succinate = fumarate + L-arginine. It participates in amino-acid biosynthesis; L-arginine biosynthesis; L-arginine from L-ornithine and carbamoyl phosphate: step 3/3. This chain is Argininosuccinate lyase, found in Microcystis aeruginosa (strain NIES-843 / IAM M-2473).